Consider the following 254-residue polypeptide: Ankyrin repeat domain-containing protein 7 (254 aa).

5 ANK repeats span residues 58–87 (KYRT…KINV), 91–120 (ENKS…DPDL), 124–153 (RYNT…DLEA), 157–186 (DGYT…DVNA), and 190–219 (YQRT…ELCY).

As to expression, testis specific.

The chain is Ankyrin repeat domain-containing protein 7 (ANKRD7) from Homo sapiens (Human).